The chain runs to 193 residues: Dephospho-CoA kinase (193 aa).

The DPCK domain occupies 5–193 (IIGLTGGIAS…KKVERFCETI (189 aa)). 13–18 (ASGKST) provides a ligand contact to ATP.

This sequence belongs to the CoaE family.

It localises to the cytoplasm. It carries out the reaction 3'-dephospho-CoA + ATP = ADP + CoA + H(+). Its pathway is cofactor biosynthesis; coenzyme A biosynthesis; CoA from (R)-pantothenate: step 5/5. Functionally, catalyzes the phosphorylation of the 3'-hydroxyl group of dephosphocoenzyme A to form coenzyme A. This Fusobacterium nucleatum subsp. nucleatum (strain ATCC 25586 / DSM 15643 / BCRC 10681 / CIP 101130 / JCM 8532 / KCTC 2640 / LMG 13131 / VPI 4355) protein is Dephospho-CoA kinase.